The following is a 336-amino-acid chain: E3 ubiquitin-protein ligase RING2 (336 aa).

The segment at 2 to 179 (TQTVQTNGVQ…AEDNGDSSHC (178 aa)) is interaction with HIP2. An RING-type zinc finger spans residues 51-91 (CPICLDMLKNTMTTKECLHRFCADCIITALRSGNKECPTCR). Positions 93-98 (KLVSKR) are interaction with nucleosomes via an acidic patch on histone H2A and histone H2B. The segment at 158–218 (RGKKHQIENG…NATENGGGDI (61 aa)) is disordered. Residues 176–190 (SSHCSNASVHSNQEA) show a composition bias toward polar residues.

Component of chromatin-associated Polycomb (PcG) complexes. Component of a PRC1-like complex. Component of some MLL1/MLL complex.

The protein resides in the nucleus. It is found in the cytoplasm. It localises to the chromosome. It catalyses the reaction S-ubiquitinyl-[E2 ubiquitin-conjugating enzyme]-L-cysteine + [acceptor protein]-L-lysine = [E2 ubiquitin-conjugating enzyme]-L-cysteine + N(6)-ubiquitinyl-[acceptor protein]-L-lysine.. Its pathway is protein modification; protein ubiquitination. In terms of biological role, E3 ubiquitin-protein ligase that mediates monoubiquitination of 'Lys-119' of histone H2A (H2AK119Ub), thereby playing a central role in histone code and gene regulation. H2AK119Ub gives a specific tag for epigenetic transcriptional repression. Essential component of a Polycomb group (PcG) multiprotein PRC1-like complex, a complex class required to maintain the transcriptionally repressive state of many genes, including Hox genes, throughout development. PcG PRC1 complex acts via chromatin remodeling and modification of histones, rendering chromatin heritably changed in its expressibility. The polypeptide is E3 ubiquitin-protein ligase RING2 (rnf2) (Danio rerio (Zebrafish)).